A 349-amino-acid polypeptide reads, in one-letter code: Isopentenyl-diphosphate delta-isomerase (349 aa).

Position 6-7 (6-7) interacts with substrate; the sequence is RK. FMN is bound by residues 62–64, serine 93, and asparagine 122; that span reads AMT. Position 152 (glutamine 152) interacts with substrate. Glutamate 153 provides a ligand contact to Mg(2+). Residues lysine 184, threonine 214, 258-259, and 280-281 contribute to the FMN site; these read GG and AG.

The protein belongs to the IPP isomerase type 2 family. As to quaternary structure, homooctamer. Dimer of tetramers. It depends on FMN as a cofactor. The cofactor is NADPH. Requires Mg(2+) as cofactor.

The protein resides in the cytoplasm. It catalyses the reaction isopentenyl diphosphate = dimethylallyl diphosphate. In terms of biological role, involved in the biosynthesis of isoprenoids. Catalyzes the 1,3-allylic rearrangement of the homoallylic substrate isopentenyl (IPP) to its allylic isomer, dimethylallyl diphosphate (DMAPP). This is Isopentenyl-diphosphate delta-isomerase from Bacillus anthracis (strain A0248).